Reading from the N-terminus, the 112-residue chain is Putative acyl carrier protein, mitochondrial (112 aa).

Residues 1 to 28 (MLSRFSSQLRFISAVRPVIPKFQPLRFY) constitute a mitochondrion transit peptide. Residues 33 to 109 (PDAEKRILKV…DAISYITKNP (77 aa)) form the Carrier domain. Serine 69 bears the O-(pantetheine 4'-phosphoryl)serine mark.

Belongs to the acyl carrier protein (ACP) family. Post-translationally, 4'-phosphopantetheine is transferred from CoA to a specific serine of apo-ACP by acpS. This modification is essential for activity because fatty acids are bound in thioester linkage to the sulfhydryl of the prosthetic group.

It localises to the mitochondrion. Its pathway is lipid metabolism; fatty acid biosynthesis. Carrier of the growing fatty acid chain in fatty acid biosynthesis. May be involved in the synthesis of very-long-chain fatty acids. This chain is Putative acyl carrier protein, mitochondrial, found in Schizosaccharomyces pombe (strain 972 / ATCC 24843) (Fission yeast).